Here is a 93-residue protein sequence, read N- to C-terminus: Putative septation protein SpoVG (93 aa).

It belongs to the SpoVG family.

Functionally, could be involved in septation. The polypeptide is Putative septation protein SpoVG (Lachnoclostridium phytofermentans (strain ATCC 700394 / DSM 18823 / ISDg) (Clostridium phytofermentans)).